Here is a 93-residue protein sequence, read N- to C-terminus: Pyrimidine/purine nucleoside phosphorylase (93 aa).

It belongs to the nucleoside phosphorylase PpnP family.

The catalysed reaction is a purine D-ribonucleoside + phosphate = a purine nucleobase + alpha-D-ribose 1-phosphate. It carries out the reaction adenosine + phosphate = alpha-D-ribose 1-phosphate + adenine. It catalyses the reaction cytidine + phosphate = cytosine + alpha-D-ribose 1-phosphate. The enzyme catalyses guanosine + phosphate = alpha-D-ribose 1-phosphate + guanine. The catalysed reaction is inosine + phosphate = alpha-D-ribose 1-phosphate + hypoxanthine. It carries out the reaction thymidine + phosphate = 2-deoxy-alpha-D-ribose 1-phosphate + thymine. It catalyses the reaction uridine + phosphate = alpha-D-ribose 1-phosphate + uracil. The enzyme catalyses xanthosine + phosphate = alpha-D-ribose 1-phosphate + xanthine. Its function is as follows. Catalyzes the phosphorolysis of diverse nucleosides, yielding D-ribose 1-phosphate and the respective free bases. Can use uridine, adenosine, guanosine, cytidine, thymidine, inosine and xanthosine as substrates. Also catalyzes the reverse reactions. This Vibrio atlanticus (strain LGP32) (Vibrio splendidus (strain Mel32)) protein is Pyrimidine/purine nucleoside phosphorylase.